A 291-amino-acid polypeptide reads, in one-letter code: Bifunctional protein FolD (291 aa).

NADP(+) contacts are provided by residues 166–168 (GAS) and Ile-232.

Belongs to the tetrahydrofolate dehydrogenase/cyclohydrolase family. In terms of assembly, homodimer.

It carries out the reaction (6R)-5,10-methylene-5,6,7,8-tetrahydrofolate + NADP(+) = (6R)-5,10-methenyltetrahydrofolate + NADPH. The catalysed reaction is (6R)-5,10-methenyltetrahydrofolate + H2O = (6R)-10-formyltetrahydrofolate + H(+). It participates in one-carbon metabolism; tetrahydrofolate interconversion. Its function is as follows. Catalyzes the oxidation of 5,10-methylenetetrahydrofolate to 5,10-methenyltetrahydrofolate and then the hydrolysis of 5,10-methenyltetrahydrofolate to 10-formyltetrahydrofolate. This chain is Bifunctional protein FolD, found in Photorhabdus laumondii subsp. laumondii (strain DSM 15139 / CIP 105565 / TT01) (Photorhabdus luminescens subsp. laumondii).